The chain runs to 267 residues: Acyl-[acyl-carrier-protein]--UDP-N-acetylglucosamine O-acyltransferase (267 aa).

The protein belongs to the transferase hexapeptide repeat family. LpxA subfamily. In terms of assembly, homotrimer.

Its subcellular location is the cytoplasm. The catalysed reaction is a (3R)-hydroxyacyl-[ACP] + UDP-N-acetyl-alpha-D-glucosamine = a UDP-3-O-[(3R)-3-hydroxyacyl]-N-acetyl-alpha-D-glucosamine + holo-[ACP]. It participates in glycolipid biosynthesis; lipid IV(A) biosynthesis; lipid IV(A) from (3R)-3-hydroxytetradecanoyl-[acyl-carrier-protein] and UDP-N-acetyl-alpha-D-glucosamine: step 1/6. Involved in the biosynthesis of lipid A, a phosphorylated glycolipid that anchors the lipopolysaccharide to the outer membrane of the cell. The protein is Acyl-[acyl-carrier-protein]--UDP-N-acetylglucosamine O-acyltransferase of Proteus mirabilis (strain HI4320).